The following is a 211-amino-acid chain: Uracil phosphoribosyltransferase (211 aa).

5-phospho-alpha-D-ribose 1-diphosphate is bound by residues Arg-78, Arg-103, and 130–138 (DPMLATGGT). Uracil is bound by residues Ile-195 and 200–202 (GDA). Asp-201 is a 5-phospho-alpha-D-ribose 1-diphosphate binding site.

The protein belongs to the UPRTase family. Requires Mg(2+) as cofactor.

The catalysed reaction is UMP + diphosphate = 5-phospho-alpha-D-ribose 1-diphosphate + uracil. It participates in pyrimidine metabolism; UMP biosynthesis via salvage pathway; UMP from uracil: step 1/1. With respect to regulation, allosterically activated by GTP. Functionally, catalyzes the conversion of uracil and 5-phospho-alpha-D-ribose 1-diphosphate (PRPP) to UMP and diphosphate. The chain is Uracil phosphoribosyltransferase from Kocuria rhizophila (strain ATCC 9341 / DSM 348 / NBRC 103217 / DC2201).